The sequence spans 309 residues: Porphobilinogen deaminase (309 aa).

S-(dipyrrolylmethanemethyl)cysteine is present on cysteine 241.

This sequence belongs to the HMBS family. Monomer. Dipyrromethane is required as a cofactor.

The catalysed reaction is 4 porphobilinogen + H2O = hydroxymethylbilane + 4 NH4(+). The protein operates within porphyrin-containing compound metabolism; protoporphyrin-IX biosynthesis; coproporphyrinogen-III from 5-aminolevulinate: step 2/4. Its function is as follows. Tetrapolymerization of the monopyrrole PBG into the hydroxymethylbilane pre-uroporphyrinogen in several discrete steps. The protein is Porphobilinogen deaminase of Bacillus thuringiensis subsp. konkukian (strain 97-27).